The sequence spans 350 residues: Guanine nucleotide-binding protein G(t) subunit alpha-1 (350 aa).

Residues 1-21 (MGAGASAEEKHSRELEKKLKE) are disordered. Glycine 2 is lipidated: N-myristoyl glycine. Positions 7 to 21 (AEEKHSRELEKKLKE) are enriched in basic and acidic residues. Residues 28 to 350 (RTVKLLLLGA…KENLKDCGLF (323 aa)) form the G-alpha domain. A G1 motif region spans residues 31 to 44 (KLLLLGAGESGKST). A GTP-binding site is contributed by 36-43 (GAGESGKS). Serine 43 is a binding site for Mg(2+). Tyrosine 142 carries the phosphotyrosine modification. Residues aspartate 146, 171–177 (LRSRVKT), glycine 199, 265–268 (NKKD), and alanine 322 each bind GTP. The interval 169 to 177 (DVLRSRVKT) is G2 motif. Threonine 177 is a binding site for Mg(2+). The tract at residues 192–201 (FRMFDVGGQR) is G3 motif. Residues 261 to 268 (VLFLNKKD) form a G4 motif region. The G5 motif stretch occupies residues 320 to 325 (TCATDT). The interval 340-350 (IKENLKDCGLF) is interaction with RHO.

In terms of assembly, heterotrimeric G proteins are composed of 3 subunits alpha, beta and gamma. The alpha chain contains the guanine nucleotide binding site. Interacts with RHO. Interacts with RGS9 and PDE6G. Interacts (when myristoylated) with UNC119; interaction is required for localization in sensory neurons. Rod.

Its subcellular location is the cell projection. It is found in the cilium. It localises to the photoreceptor outer segment. The protein localises to the membrane. The protein resides in the photoreceptor inner segment. In terms of biological role, functions as a signal transducer for the rod photoreceptor RHO. Required for normal RHO-mediated light perception by the retina. Guanine nucleotide-binding proteins (G proteins) function as transducers downstream of G protein-coupled receptors (GPCRs), such as the photoreceptor RHO. The alpha chain contains the guanine nucleotide binding site and alternates between an active, GTP-bound state and an inactive, GDP-bound state. Activated RHO promotes GDP release and GTP binding. Signaling is mediated via downstream effector proteins, such as cGMP-phosphodiesterase. This is Guanine nucleotide-binding protein G(t) subunit alpha-1 (GNAT1) from Bos taurus (Bovine).